The primary structure comprises 501 residues: Lysine--tRNA ligase (501 aa).

Mg(2+) contacts are provided by E402 and E409.

It belongs to the class-II aminoacyl-tRNA synthetase family. In terms of assembly, homodimer. The cofactor is Mg(2+).

The protein localises to the cytoplasm. The enzyme catalyses tRNA(Lys) + L-lysine + ATP = L-lysyl-tRNA(Lys) + AMP + diphosphate. The chain is Lysine--tRNA ligase (lysS) from Helicobacter pylori (strain J99 / ATCC 700824) (Campylobacter pylori J99).